Here is a 620-residue protein sequence, read N- to C-terminus: Extensin (620 aa).

An N-terminal signal peptide occupies residues 1 to 20 (MKLSTLFALVLLLQSTAILS). A compositionally biased stretch (pro residues) spans 34–45 (LPPPVTSQPPPS). A disordered region spans residues 34–620 (LPPPVTSQPP…PPYGLLLSTP (587 aa)). The H-A-P-P repeat unit spans residues 70 to 73 (HAPP). A compositionally biased stretch (pro residues) spans 106–129 (NPPPSPVISPSHPPPSYGAPPPSH). Over residues 145 to 163 (SHGHAPPSGGHTPPRGQHP) the composition is skewed to low complexity. Residues 148–151 (HAPP) form an H-A-P-P repeat. Over residues 164–177 (PSHRRPSPPSRHGH) the composition is skewed to basic residues. A compositionally biased stretch (pro residues) spans 178 to 219 (PPPPTYAQPPPTPIYSPSPQVQPPPTYSPPPPTHVQPTPSPP). The interval 205-620 (SPPPPTHVQP…PPYGLLLSTP (416 aa)) is contains the Ser-Pro(4) repeats. 2 tandem repeats follow at residues 229–235 (THRHAPP) and 236–242 (THRHAPP). Positions 229 to 241 (THRHAPPTHRHAP) are enriched in basic residues. Residues 229–242 (THRHAPPTHRHAPP) form a 2 X 7 AA tandem repeats of T-H-R-H-A-P-P region. 2 stretches are compositionally biased toward pro residues: residues 251–552 (HLPP…PPHW) and 562–613 (GQPP…PPPY). The segment at 499–600 (PPTFSPPPPR…PTPTYGQPPS (102 aa)) is 3 X approximate tandem repeats.

Hydroxylated on proline residues in the S-P-P-P-P repeat. Post-translationally, O-glycosylated on hydroxyprolines. Expressed in the tip of the emerging lateral roots.

The protein resides in the secreted. It is found in the primary cell wall. Has a specialized structural function, possibly in the mechanical penetration of the cortex and epidermis of the main root. This Nicotiana tabacum (Common tobacco) protein is Extensin (HRGPNT3).